The chain runs to 359 residues: MTTDLTDRRRLILKLAIQEFIESSQPVASDLLVRKYRLNVSPATVRNELAALEELGYLTHLHTSAGRVPTDAGYRYFVENLMDRTPLSATEQRTIRHQFYQVRSELDQWIQLAGAVLARTAQNASVVTPPRAQQARLKHLELIAIHETTALMVLVLHDGTIRQQTLTLDVAMTQEELSRCAAQINERCCDAPVERIEEVLKQERAQEPPGGNALVCQVLDLVVKAMHQFNEHISSDIHSDGLIEILNQPEFSRVERVRRMVEILQSGRALGTLIPRALSSSGVQVVIGGEHSYDEMREYSVVLSRYGGGEIVGVLGVIGPTRMAYPRAISAVRYISAVMSDLLAELYGIEGANRLNSEP.

It belongs to the HrcA family.

Negative regulator of class I heat shock genes (grpE-dnaK-dnaJ and groELS operons). Prevents heat-shock induction of these operons. This chain is Heat-inducible transcription repressor HrcA, found in Roseiflexus sp. (strain RS-1).